The primary structure comprises 1613 residues: MAAATVVVPAEWIKNWEKSGRGEFLHLCRILSENKGHDSSTYRDFQQALYELSYHVIKGNLKHEQASNVLNDISEFREDMPSILADVFCILDIETNCLEEKSKRDYFTQLVLACLYLVSDTVLKERLDPETLESLGLIKQSQQFNQKSVKIKTKLFYKQQKFNLLREENEGYAKLIAELGQDLSGNITSDLILENIKSLIGCFNLDPNRVLDVILEVFECRPEHDDFFISLLESYMSMCEPQTLCHILGFKFKFYQEPNGETPSSLYRVAAVLLQFNLIDLDDLYVHLLPADNSIMDEHKREIVEAKQIVRKLTMVVLSSEKIDEREKEKEKEEEKVEKPPDNQKLGLLEALLKIGDWQHAQNIMDQMPPYYAASHKLIALAICKLIHITIEPLYRRVGVPKGAKGSPVNALQNKRAPKQAENFEDLRRDVFNMFCYLGPHLSHDPILFAKVVRIGKSFMKEFQSDGSKSEDKEKTEVILSCLLSITDQVLLPSLSLMDCNACMSEELWGMFKTFPYQHRYRLYGQWKNETYNSHPLLVKVKAQTIDRAKYIMKRLTKENVKPSGRQIGKLSHSNPTILFDYILSQIQKYDNLITPVVDSLKYLTSLNYDVLAYCIIEALANPEKERMKHDDTTISSWLQSLASFCGAVFRKYPIDLAGLLQYVANQLKAGKSFDLLILKEVVQKMAGIEITEEMTMEQLEAMTGGEQLKAEGGYFGQIRNTKKSSQRLKDALLDHDLALPLCLLMAQQRNGVIFQEGGEKHLKLVGKLYDQCHDTLVQFGGFLASNLSTEDYIKRVPSIDVLCNEFHTPHDAAFFLSRPMYAHHISSKYDELKKSEKGSKQQHKVHKYITSCEMVMAPVHEAVVSLHVSKVWDDISPQFYATFWSLTMYDLAVPHTSYEREVNKLKIQMKAIDDNQEMPPNKKKKEKERCTALQDKLLEEEKKQMEHVQRVLQRLKLEKDNWLLAKSTKNETITKFLQLCIFPRCIFSAIDAVYCARFVELVHQQKTPNFSTLLCYDRVFSDIIYTVASCTENEASRYGRFLCCMLETVTRWHSDRATYEKECGNYPGFLTILRATGFDGGNKADQLDYENFRHVVHKWHYKLTKASVHCLETGEYTHIRNILIVLTKILPWYPKVLNLGQALERRVHKICQEEKEKRPDLYALAMGYSGQLKSRKPYMIPENEFHNKDPPPRNAVASVQNGPGGGPSSSSIGSASKSDESSTEETDKSRERSQCSVKAVNKASSATPKGNSSNGNSGSNSKAVKENEKEKGKEKEKEKKEKTPATTPEARVLGKDGKEKPKEERPNKDEKARETKERTPKSDKEKEKFKKEEKAKDEKFKTAIPNVESKSTQEKEREKEPSRERDIAKDMKSKENVKGGEKTAVSGSLKSPVPRSDIAEPEREQKRRKIDTHPSPSHSSTVKDSLIELKESSAKLYINHTPPPLSKSKEREMDKKDLDKSRERSREREKKDEKDRKERKRDHSNNDREVPPDLTKRRKEENGTMGVSKHKSESPCESPYANEKDKEKNKSKSSGKEKSSDSFKSEKMDKISSGGKKESRHDKEKIEKKEKRDSSGGKEEKKQYPFHLNNALNQCMESFDADNVLKVYSSVV.

Coiled-coil stretches lie at residues 293–339 and 896–965; these read NSIM…KVEK and HTSY…NWLL. The short motif at 923–928 is the Nuclear localization signal element; that stretch reads KKKKEK. The disordered stretch occupies residues 1182-1586; that stretch reads PENEFHNKDP…GGKEEKKQYP (405 aa). Residues 1218-1234 show a composition bias toward basic and acidic residues; sequence KSDESSTEETDKSRERS. At Ser1222 the chain carries Phosphoserine. Positions 1251–1262 are enriched in low complexity; that stretch reads GNSSNGNSGSNS. 3 stretches are compositionally biased toward basic and acidic residues: residues 1264–1284, 1293–1342, and 1352–1382; these read AVKE…KEKT, VLGK…EKFK, and STQE…KGGE. The residue at position 1384 (Thr1384) is a Phosphothreonine. Ser1389, Ser1392, and Ser1416 each carry phosphoserine. A compositionally biased stretch (polar residues) spans 1415–1424; the sequence is PSPSHSSTVK. A Phosphothreonine modification is found at Thr1442. The span at 1448–1503 shows a compositional bias: basic and acidic residues; it reads KSKEREMDKKDLDKSRERSREREKKDEKDRKERKRDHSNNDREVPPDLTKRRKEEN. 3 positions are modified to phosphoserine: Ser1449, Ser1485, and Ser1515. A coiled-coil region spans residues 1464-1491; sequence ERSREREKKDEKDRKERKRDHSNNDREV. Residues 1523–1584 are compositionally biased toward basic and acidic residues; the sequence is NEKDKEKNKS…SSGGKEEKKQ (62 aa).

Belongs to the THOC2 family. As to quaternary structure, component of the THO subcomplex, which is composed of THOC1, THOC2, THOC3, THOC5, THOC6 and THOC7. The THO subcomplex interacts with DDX39B to form the THO-DDX39B complex which multimerizes into a 28-subunit tetrameric assembly. Component of the transcription/export (TREX) complex at least composed of ALYREF/THOC4, DDX39B, SARNP/CIP29, CHTOP and the THO subcomplex; in the complex interacts with THOC1, THOC3, THOC5, THOC7 and DDX39B. TREX seems to have a dynamic structure involving ATP-dependent remodeling. Interacts with POLDIP3 and ZC3H11A.

The protein localises to the nucleus. It is found in the nucleus speckle. Its subcellular location is the cytoplasm. Component of the THO subcomplex of the TREX complex which is thought to couple mRNA transcription, processing and nuclear export, and which specifically associates with spliced mRNA and not with unspliced pre-mRNA. Required for efficient export of polyadenylated RNA and spliced mRNA. The THOC1-THOC2-THOC3 core complex alone is sufficient to bind export factor NXF1-NXT1 and promote ATPase activity of DDX39B; in the complex THOC2 is the only component that directly interacts with DDX39B. TREX is recruited to spliced mRNAs by a transcription-independent mechanism, binds to mRNA upstream of the exon-junction complex (EJC) and is recruited in a splicing- and cap-dependent manner to a region near the 5' end of the mRNA where it functions in mRNA export to the cytoplasm via the TAP/NXF1 pathway. Required for NXF1 localization to the nuclear rim. THOC2 (and probably the THO complex) is involved in releasing mRNA from nuclear speckle domains. Plays a role for proper neuronal development. This chain is THO complex subunit 2 (THOC2), found in Dasypus novemcinctus (Nine-banded armadillo).